The sequence spans 100 residues: Cell division protein FtsB (100 aa).

Over 1 to 3 the chain is Cytoplasmic; the sequence is MKQ. A helical membrane pass occupies residues 4–21; it reads LIFLLICLLSLLQYRLWL. Residues 22–100 lie on the Periplasmic side of the membrane; that stretch reads GDNNLSEYVL…ELRERNPFNR (79 aa). Residues 49–73 adopt a coiled-coil conformation; it reads RNQILKEEIIDLKRGTEAIEERARN.

This sequence belongs to the FtsB family. As to quaternary structure, part of a complex composed of FtsB, FtsL and FtsQ.

Its subcellular location is the cell inner membrane. Functionally, essential cell division protein. May link together the upstream cell division proteins, which are predominantly cytoplasmic, with the downstream cell division proteins, which are predominantly periplasmic. The protein is Cell division protein FtsB of Shewanella frigidimarina (strain NCIMB 400).